Consider the following 779-residue polypeptide: Phosphoribosylformylglycinamidine synthase subunit PurL (779 aa).

Histidine 52 is an active-site residue. The ATP site is built by tyrosine 55 and lysine 94. Glutamate 96 contacts Mg(2+). Substrate-binding positions include 97 to 100 and arginine 119; that span reads SHNH. Histidine 98 acts as the Proton acceptor in catalysis. Position 120 (aspartate 120) interacts with Mg(2+). Glutamine 243 is a binding site for substrate. Mg(2+) is bound at residue aspartate 271. 315-317 contacts substrate; sequence ESQ. Residues asparagine 523 and glycine 560 each coordinate ATP. Asparagine 561 contributes to the Mg(2+) binding site. Residue serine 563 participates in substrate binding.

Belongs to the FGAMS family. In terms of assembly, monomer. Part of the FGAM synthase complex composed of 1 PurL, 1 PurQ and 2 PurS subunits.

It is found in the cytoplasm. The enzyme catalyses N(2)-formyl-N(1)-(5-phospho-beta-D-ribosyl)glycinamide + L-glutamine + ATP + H2O = 2-formamido-N(1)-(5-O-phospho-beta-D-ribosyl)acetamidine + L-glutamate + ADP + phosphate + H(+). It functions in the pathway purine metabolism; IMP biosynthesis via de novo pathway; 5-amino-1-(5-phospho-D-ribosyl)imidazole from N(2)-formyl-N(1)-(5-phospho-D-ribosyl)glycinamide: step 1/2. Its function is as follows. Part of the phosphoribosylformylglycinamidine synthase complex involved in the purines biosynthetic pathway. Catalyzes the ATP-dependent conversion of formylglycinamide ribonucleotide (FGAR) and glutamine to yield formylglycinamidine ribonucleotide (FGAM) and glutamate. The FGAM synthase complex is composed of three subunits. PurQ produces an ammonia molecule by converting glutamine to glutamate. PurL transfers the ammonia molecule to FGAR to form FGAM in an ATP-dependent manner. PurS interacts with PurQ and PurL and is thought to assist in the transfer of the ammonia molecule from PurQ to PurL. This is Phosphoribosylformylglycinamidine synthase subunit PurL from Prochlorococcus marinus subsp. pastoris (strain CCMP1986 / NIES-2087 / MED4).